The following is a 233-amino-acid chain: Clathrin light chain (233 aa).

The segment at 1–124 (MSEKFPPLED…EDRSEVVDQW (124 aa)) is disordered. The span at 17-43 (PNDKKDDDTDFLKREAEILGDEFKTEQ) shows a compositional bias: basic and acidic residues. T49 is modified (phosphothreonine). S52 carries the phosphoserine modification. Residues 56 to 67 (DDDEIRDFEEQF) are compositionally biased toward acidic residues. Over residues 69–92 (DINSANGAVSSDQNGSATVSSGND) the composition is skewed to polar residues. Positions 112-124 (SVKEDRSEVVDQW) are enriched in basic and acidic residues. Positions 125-186 (KQRRAVEIHE…EAFLKKRDEF (62 aa)) form a coiled coil. An involved in binding clathrin heavy chain region spans residues 144-204 (KELQDEAIKH…DRALQLINQD (61 aa)).

This sequence belongs to the clathrin light chain family. Clathrin coats are formed from molecules containing 3 heavy chains and 3 light chains. Interacts with the auxilin-like clathrin uncoating factor SWA2.

The protein localises to the cytoplasmic vesicle membrane. Its subcellular location is the membrane. The protein resides in the coated pit. Clathrin is the major protein of the polyhedral coat of coated pits and vesicles. In yeast, it is involved in the retention of proteins in an intracellular membrane compartment, presumably the trans-Golgi. The yeast light chain is important for cell growth. The light chain may help to properly orient the assembly/ disassembly of the clathrin coats. The sequence is that of Clathrin light chain (CLC1) from Saccharomyces cerevisiae (strain ATCC 204508 / S288c) (Baker's yeast).